Reading from the N-terminus, the 389-residue chain is GTPase Obg (389 aa).

One can recognise an Obg domain in the interval 1–159; sequence MKFVDEAVIR…RSLKLELMLL (159 aa). The disordered stretch occupies residues 122 to 144; it reads FHGLGNTRFKSSTNRAPRQKTLG. In terms of domain architecture, OBG-type G spans 160–333; the sequence is ADVGLLGMPN…LSLKLIDFIE (174 aa). GTP contacts are provided by residues 166–173, 191–195, 213–216, 283–286, and 314–316; these read GMPNAGKS, FTTLV, DIPG, NKTD, and SAY. S173 and T193 together coordinate Mg(2+).

This sequence belongs to the TRAFAC class OBG-HflX-like GTPase superfamily. OBG GTPase family. Monomer. The cofactor is Mg(2+).

The protein localises to the cytoplasm. In terms of biological role, an essential GTPase which binds GTP, GDP and possibly (p)ppGpp with moderate affinity, with high nucleotide exchange rates and a fairly low GTP hydrolysis rate. Plays a role in control of the cell cycle, stress response, ribosome biogenesis and in those bacteria that undergo differentiation, in morphogenesis control. The protein is GTPase Obg of Shewanella woodyi (strain ATCC 51908 / MS32).